The primary structure comprises 123 residues: uncharacterized protein (123 aa).

Disordered stretches follow at residues 1 to 21 (MGAP…KLFK) and 82 to 123 (EKTA…EDES).

This is an uncharacterized protein from Homo sapiens (Human).